A 225-amino-acid chain; its full sequence is Cytidylate kinase (225 aa).

Gly-11–Thr-19 lines the ATP pocket.

The protein belongs to the cytidylate kinase family. Type 1 subfamily.

It is found in the cytoplasm. It catalyses the reaction CMP + ATP = CDP + ADP. The enzyme catalyses dCMP + ATP = dCDP + ADP. In Bacillus cereus (strain B4264), this protein is Cytidylate kinase.